The sequence spans 658 residues: D-ornithine--citrate ligase (658 aa).

The protein belongs to the IucA/IucC family.

The enzyme catalyses D-ornithine + citrate + ATP = N(5)-[(S)-citryl]-D-ornithine + AMP + diphosphate + H(+). The protein operates within siderophore biosynthesis. Functionally, involved in the biosynthesis of the siderophore staphyloferrin A. Catalyzes the ATP-dependent condensation of D-ornithine and citrate to form a citryl-D-ornithine intermediate. The sequence is that of D-ornithine--citrate ligase from Staphylococcus aureus (strain NCTC 8325 / PS 47).